We begin with the raw amino-acid sequence, 863 residues long: Protein translocase subunit SecA (863 aa).

Residues Gln88, Gly106 to Thr110, and Asp507 contribute to the ATP site. The disordered stretch occupies residues Lys806–Ala863. The span at Glu812–Ala829 shows a compositional bias: polar residues. 4 residues coordinate Zn(2+): Cys840, Cys842, Cys851, and His852.

The protein belongs to the SecA family. As to quaternary structure, monomer and homodimer. Part of the essential Sec protein translocation apparatus which comprises SecA, SecYEG and auxiliary proteins SecDF-YajC and YidC. The cofactor is Zn(2+).

The protein localises to the cell inner membrane. It localises to the cytoplasm. The catalysed reaction is ATP + H2O + cellular proteinSide 1 = ADP + phosphate + cellular proteinSide 2.. Part of the Sec protein translocase complex. Interacts with the SecYEG preprotein conducting channel. Has a central role in coupling the hydrolysis of ATP to the transfer of proteins into and across the cell membrane, serving as an ATP-driven molecular motor driving the stepwise translocation of polypeptide chains across the membrane. This Campylobacter lari (strain RM2100 / D67 / ATCC BAA-1060) protein is Protein translocase subunit SecA.